The primary structure comprises 202 residues: AFG2-interacting ribosome maturation factor (202 aa).

In terms of assembly, part of the 55LCC heterohexameric ATPase complex. Does not associate with pre-60S ribosomal particles.

It localises to the nucleus. The protein localises to the cytoplasm. In terms of biological role, part of the 55LCC heterohexameric ATPase complex which is chromatin-associated and promotes replisome proteostasis to maintain replication fork progression and genome stability. Required for replication fork progression, sister chromatid cohesion, and chromosome stability. The ATPase activity is specifically enhanced by replication fork DNA and is coupled to cysteine protease-dependent cleavage of replisome substrates in response to replication fork damage. Uses ATPase activity to process replisome substrates in S-phase, facilitating their proteolytic turnover from chromatin to ensure DNA replication and mitotic fidelity. Involved in the cytoplasmic maturation steps of pre-60S ribosomal particles by promoting the release of shuttling protein RSL24D1/RLP24 from the pre-ribosomal particles. Plays an essential role in early embryonic development. The protein is AFG2-interacting ribosome maturation factor (airim) of Danio rerio (Zebrafish).